Reading from the N-terminus, the 98-residue chain is Protein S100-A13 (98 aa).

The EF-hand domain maps to 18-53 (TTFFTFARQEGRKDSLSVNEFKELVTQQLPHLLKDV). Ca(2+) contacts are provided by Ser-32, Glu-37, Asp-64, Asn-66, Asp-68, Glu-70, and Glu-75. Ser-32 is subject to Phosphoserine.

Belongs to the S-100 family. Homodimer. Part of a copper-dependent multiprotein complex containing S100A13, FGF1 and SYT1. Interacts with FGF1 and SYT1. Interacts with IL1A. In terms of tissue distribution, expressed in heart and skeletal muscle.

Its subcellular location is the cytoplasm. The protein localises to the secreted. Functionally, plays a role in the export of proteins that lack a signal peptide and are secreted by an alternative pathway. Binds two calcium ions per subunit. Binds one copper ion. Binding of one copper ion does not interfere with calcium binding. Required for the copper-dependent stress-induced export of IL1A and FGF1. The calcium-free protein binds to lipid vesicles containing phosphatidylserine, but not to vesicles containing phosphatidylcholine. The polypeptide is Protein S100-A13 (S100A13) (Homo sapiens (Human)).